Consider the following 98-residue polypeptide: Large ribosomal subunit protein uL23 (98 aa).

It belongs to the universal ribosomal protein uL23 family. As to quaternary structure, part of the 50S ribosomal subunit. Contacts protein L29, and trigger factor when it is bound to the ribosome.

In terms of biological role, one of the early assembly proteins it binds 23S rRNA. One of the proteins that surrounds the polypeptide exit tunnel on the outside of the ribosome. Forms the main docking site for trigger factor binding to the ribosome. The chain is Large ribosomal subunit protein uL23 from Rickettsia typhi (strain ATCC VR-144 / Wilmington).